The following is a 191-amino-acid chain: Fe/S biogenesis protein NfuA (191 aa).

Positions 149 and 152 each coordinate [4Fe-4S] cluster.

This sequence belongs to the NfuA family. In terms of assembly, homodimer. [4Fe-4S] cluster serves as cofactor.

Involved in iron-sulfur cluster biogenesis. Binds a 4Fe-4S cluster, can transfer this cluster to apoproteins, and thereby intervenes in the maturation of Fe/S proteins. Could also act as a scaffold/chaperone for damaged Fe/S proteins. The polypeptide is Fe/S biogenesis protein NfuA (Cronobacter sakazakii (strain ATCC BAA-894) (Enterobacter sakazakii)).